Consider the following 118-residue polypeptide: MARVVKIDSAESWNFYVSQAKNQNCPIVAHFTALWCIPSVFMNSFFEELAFNYKDALFLIVDVDEVKEVASQLEVKAMPTFLFLKDGNAMDKLVGANPDEIKKRVDGFVQSSRVVHIA.

The 109-residue stretch at 2–110 folds into the Thioredoxin domain; it reads ARVVKIDSAE…IKKRVDGFVQ (109 aa).

This sequence belongs to the thioredoxin family. Ubiquitous.

The protein resides in the cytoplasm. Functionally, possesses low disulfide reductase activity, but efficient protein disulfide isomerase activity. Does not possess deglutathionylation activity. This chain is Thioredoxin-like protein CXXS1 (CXXS1), found in Arabidopsis thaliana (Mouse-ear cress).